Consider the following 77-residue polypeptide: Translation initiation factor IF-1, chloroplastic (77 aa).

Positions Met-1–Arg-71 constitute an S1-like domain.

The protein belongs to the IF-1 family. In terms of assembly, component of the 30S ribosomal translation pre-initiation complex which assembles on the 30S ribosome in the order IF-2 and IF-3, IF-1 and N-formylmethionyl-tRNA(fMet); mRNA recruitment can occur at any time during PIC assembly.

It is found in the plastid. Its subcellular location is the chloroplast. In terms of biological role, one of the essential components for the initiation of protein synthesis. Stabilizes the binding of IF-2 and IF-3 on the 30S subunit to which N-formylmethionyl-tRNA(fMet) subsequently binds. Helps modulate mRNA selection, yielding the 30S pre-initiation complex (PIC). Upon addition of the 50S ribosomal subunit IF-1, IF-2 and IF-3 are released leaving the mature 70S translation initiation complex. The protein is Translation initiation factor IF-1, chloroplastic of Phalaenopsis aphrodite subsp. formosana (Moth orchid).